Consider the following 633-residue polypeptide: Breast carcinoma-amplified sequence 1 homolog (633 aa).

Disordered regions lie at residues 1-34 (MGNQ…CVQN) and 57-422 (SSKD…KLFW). 2 stretches are compositionally biased toward polar residues: residues 24–34 (KVTSDNECVQN) and 57–68 (SSKDNVATSSPK). Serine 127 bears the Phosphoserine mark. Polar residues predominate over residues 278–288 (VDTTENSSSIM). A compositionally biased stretch (basic and acidic residues) spans 300–318 (TETKKDPEDTKATKADSVC). Serine 328 bears the Phosphoserine mark. Position 330 is a phosphothreonine (threonine 330). The span at 359–378 (NSPTTSANLKSDKANFTPQE) shows a compositional bias: polar residues. Serine 360 carries the phosphoserine modification. The segment covering 400-410 (SEGRDSGKEKA) has biased composition (basic and acidic residues). A phosphoserine mark is found at serine 425 and serine 443. Residues 454–633 (ESSLQTVDLS…VSIGPVGKSK (180 aa)) form a disordered region. The span at 471–481 (TDVKVKEESKP) shows a compositional bias: basic and acidic residues. Over residues 510-522 (KDSSCQTSNSVEK) the composition is skewed to polar residues. Phosphothreonine is present on threonine 523. Serine 525 is modified (phosphoserine). A compositionally biased stretch (basic and acidic residues) spans 537–555 (KNKETSSSKDKKSVDKKSA). 2 positions are modified to phosphoserine: serine 601 and serine 615. The tract at residues 614-633 (MSDAQVQTDPVSIGPVGKSK) is interacts with DYNLL1 AND DYNLL2.

As to quaternary structure, homodimer. Interacts with DYNLL1 and DYNLL2. In terms of tissue distribution, highly expressed in the brain and, more specifically, in oligodendrocytes. Expressed in the Schwann cells (at protein level).

It is found in the cytoplasm. Its function is as follows. Required for myelination. This chain is Breast carcinoma-amplified sequence 1 homolog (Bcas1), found in Mus musculus (Mouse).